The sequence spans 131 residues: MATVPTRSGSPRQLTTKQTGDAWEVQARRWLEGKGLRFVAANVNERGGEIDLIMREGQTTVFVEVRYRRSALYGGAAASVTRSKQHKLLQTARLWLARHNGSFDTVDCRFDVVAFTGNEVEWIKDAFNDHS.

The span at 1–19 shows a compositional bias: polar residues; the sequence is MATVPTRSGSPRQLTTKQT. Residues 1 to 20 form a disordered region; sequence MATVPTRSGSPRQLTTKQTG.

It belongs to the UPF0102 family.

This chain is UPF0102 protein YraN, found in Escherichia fergusonii (strain ATCC 35469 / DSM 13698 / CCUG 18766 / IAM 14443 / JCM 21226 / LMG 7866 / NBRC 102419 / NCTC 12128 / CDC 0568-73).